The chain runs to 230 residues: Probable septum site-determining protein MinC (230 aa).

The protein belongs to the MinC family. In terms of assembly, interacts with MinD and FtsZ.

Cell division inhibitor that blocks the formation of polar Z ring septums. Rapidly oscillates between the poles of the cell to destabilize FtsZ filaments that have formed before they mature into polar Z rings. Prevents FtsZ polymerization. This Erwinia tasmaniensis (strain DSM 17950 / CFBP 7177 / CIP 109463 / NCPPB 4357 / Et1/99) protein is Probable septum site-determining protein MinC.